The sequence spans 501 residues: IQ domain-containing protein M (501 aa).

Residues 237-247 (ERQPIKPEPKS) show a composition bias toward basic and acidic residues. A disordered region spans residues 237–262 (ERQPIKPEPKSQPRIKGTPNKTDKLD). The 30-residue stretch at 290–319 (LIRMVTVMQAHVRGWLERKRLQRVMTKALD) folds into the IQ domain.

The polypeptide is IQ domain-containing protein M (Homo sapiens (Human)).